Here is a 216-residue protein sequence, read N- to C-terminus: Protein Syd (216 aa).

The protein belongs to the Syd family.

The protein localises to the cell inner membrane. In terms of biological role, interacts with the SecY protein in vivo. May bind preferentially to an uncomplexed state of SecY, thus functioning either as a chelating agent for excess SecY in the cell or as a regulatory factor that negatively controls the translocase function. The polypeptide is Protein Syd (Shewanella sp. (strain MR-4)).